We begin with the raw amino-acid sequence, 336 residues long: Serpentine receptor class delta-51 (336 aa).

A run of 7 helical transmembrane segments spans residues 14 to 34 (VYYS…LFIM), 48 to 68 (YLFN…FAQC), 93 to 113 (CFVT…SILL), 133 to 153 (ATTF…QLLT), 188 to 208 (AAII…LIAF), 237 to 257 (GLLI…SYFL), and 275 to 295 (IFGS…VLPY).

The protein belongs to the nematode receptor-like protein srd family.

The protein resides in the membrane. The protein is Serpentine receptor class delta-51 (srd-51) of Caenorhabditis elegans.